The sequence spans 125 residues: uncharacterized protein (125 aa).

Residues 19–73 form the HTH cro/C1-type domain; the sequence is IYSLRLAKGLSRQQLAEVIDVTHQQLQKYEKAINRISVGRLVLIAEALDRNIDYF. The H-T-H motif DNA-binding region spans 30–49; it reads RQQLAEVIDVTHQQLQKYEK.

This is an uncharacterized protein from Rickettsia conorii (strain ATCC VR-613 / Malish 7).